We begin with the raw amino-acid sequence, 232 residues long: Large ribosomal subunit protein uL1 (232 aa).

It belongs to the universal ribosomal protein uL1 family. In terms of assembly, part of the 50S ribosomal subunit.

Its function is as follows. Binds directly to 23S rRNA. The L1 stalk is quite mobile in the ribosome, and is involved in E site tRNA release. Protein L1 is also a translational repressor protein, it controls the translation of the L11 operon by binding to its mRNA. In Xylella fastidiosa (strain M12), this protein is Large ribosomal subunit protein uL1.